Consider the following 306-residue polypeptide: Pantothenate kinase (306 aa).

Position 91-98 (91-98 (GSVAVGKS)) interacts with ATP.

This sequence belongs to the prokaryotic pantothenate kinase family.

The protein resides in the cytoplasm. It catalyses the reaction (R)-pantothenate + ATP = (R)-4'-phosphopantothenate + ADP + H(+). The protein operates within cofactor biosynthesis; coenzyme A biosynthesis; CoA from (R)-pantothenate: step 1/5. The polypeptide is Pantothenate kinase (Streptococcus pneumoniae serotype 2 (strain D39 / NCTC 7466)).